The following is a 165-amino-acid chain: MKNKLIAKSLLTIAAIGITTTTIASTADASEGYGPREKKPVSINHNIVEYNDGTFKYQSRPKFNSTPKYIKFKHDYNILEFNDGTFEYGARPQFNKPAAKTDATIKKEQKLIQAQNLVREFEKTHTVSAHRKAQKAVNLVSFEYKVKKMVLQERIDNVLKQGLVK.

A signal peptide spans 1–29; sequence MKNKLIAKSLLTIAAIGITTTTIASTADA.

In terms of assembly, interacts with host fibrinogen alpha chain/FGA. Interacts with host complement protein C3.

It localises to the secreted. Its function is as follows. Extracellular fibrinogen-binding protein that plays an important role in virulence. By interacting with the alpha chain of fibrinogen and its derivative fibrin, enhances a non-functional interaction between fibrinogen and platelets and is responsible for repression of fibrinogen-dependent platelet aggregation. In addition, assembles a fibrinogen protective shield around the bacteria which results in impaired phagocytic clearance by the host. Mechanistically, interacts with host complement C3b deposited on the surface of the bacterium via its C-terminal and then recruits fibrinogen via its N-terminal. The chain is Fibrinogen-binding protein (fib) from Staphylococcus aureus (strain MSSA476).